The primary structure comprises 290 residues: Dual-specificity RNA pseudouridine synthase RluF (290 aa).

The 66-residue stretch at 7–72 folds into the S4 RNA-binding domain; that stretch reads VRLNKYISES…EAEDLVLIAL (66 aa). 2 interaction with RNA regions span residues 105–108 and 187–190; these read RLDK and RQIR. The active-site Nucleophile is Asp-107. Residues 243 to 290 form a disordered region; the sequence is VKPKAKAKPKTAGIKRPVVKMEKTAEKGGRPASNGKRFTSPGRKKKGR. Residues 261–271 show a composition bias toward basic and acidic residues; that stretch reads VKMEKTAEKGG.

It belongs to the pseudouridine synthase RsuA family. As to quaternary structure, monomer.

The catalysed reaction is uridine(2604) in 23S rRNA = pseudouridine(2604) in 23S rRNA. It carries out the reaction uridine(35) in tRNA(Tyr) = pseudouridine(35) in tRNA(Tyr). Its function is as follows. Dual specificity enzyme that catalyzes the synthesis of pseudouridine from uracil-2604 in 23S ribosomal RNA and from uracil-35 in the anticodon of tRNA(Tyr). Can, to a small extent, also react with uracil-2605. The sequence is that of Dual-specificity RNA pseudouridine synthase RluF (rluF) from Escherichia coli (strain K12).